Consider the following 1024-residue polypeptide: Nardilysin-like (1024 aa).

The disordered stretch occupies residues 41–103 (PDIYPEGSVP…DEVKGKGDHQ (63 aa)). The segment covering 52–95 (QIDEDDEDGEEEDSDGSSEDDDDDEDDEEDGEGDEEDEDEDEDE) has biased composition (acidic residues). His-129 provides a ligand contact to Zn(2+). The active-site Proton acceptor is Glu-132. His-133 contacts Zn(2+). Glu-203 is an active-site residue. Glu-210 is a Zn(2+) binding site.

This sequence belongs to the peptidase M16 family. Zn(2+) serves as cofactor.

It carries out the reaction Hydrolysis of polypeptides, preferably at -Xaa-|-Arg-Lys-, and less commonly at -Arg-|-Arg-Xaa-, in which Xaa is not Arg or Lys.. Its function is as follows. Cleaves peptide substrates on the N-terminus of arginine residues in dibasic pairs. This Arabidopsis thaliana (Mouse-ear cress) protein is Nardilysin-like.